A 150-amino-acid polypeptide reads, in one-letter code: C-type natriuretic peptide (150 aa).

The first 31 residues, methionine 1–glycine 31, serve as a signal peptide directing secretion. Residues arginine 32 to lysine 127 constitute a propeptide that is removed on maturation. Residues glycine 60–serine 73 show a composition bias toward low complexity. Residues glycine 60–arginine 109 are disordered. Cysteine 134 and cysteine 150 are disulfide-bonded.

The protein belongs to the natriuretic peptide family. In terms of tissue distribution, expressed in brain, but not in atrium or ventricle.

Its subcellular location is the secreted. Functionally, hormone which plays a role in endochondral ossification through regulation of cartilaginous growth plate chondrocytes proliferation and differentiation. May also be vasoactive and natriuretic. In Acipenser transmontanus (White sturgeon), this protein is C-type natriuretic peptide (cnp).